The following is a 228-amino-acid chain: MKFAVVVFPGSNCDVDMYHAISDELGEEVEYVWHDVDCLDDFDAILLPGGFSYGDYLRSGAIARFSNVMKAIKKAADEGKPILGVCNGFQILLEAGLLPGAMRRNNTLTFICRPIKLRVENNETMFTSQYEQGEVITIPIAHGEGNYYCDEQTLQQLIANNQIVFRYEGENPNGSLFNIAGIVNEKGNVLGMMPHPERAVHELLGGADGLKLFQSIVTYWRDAHVVTT.

The Glutamine amidotransferase type-1 domain maps to F3–V226. The Nucleophile role is filled by C86. Catalysis depends on residues H195 and E197.

Part of the FGAM synthase complex composed of 1 PurL, 1 PurQ and 2 PurS subunits.

It localises to the cytoplasm. The catalysed reaction is N(2)-formyl-N(1)-(5-phospho-beta-D-ribosyl)glycinamide + L-glutamine + ATP + H2O = 2-formamido-N(1)-(5-O-phospho-beta-D-ribosyl)acetamidine + L-glutamate + ADP + phosphate + H(+). The enzyme catalyses L-glutamine + H2O = L-glutamate + NH4(+). It participates in purine metabolism; IMP biosynthesis via de novo pathway; 5-amino-1-(5-phospho-D-ribosyl)imidazole from N(2)-formyl-N(1)-(5-phospho-D-ribosyl)glycinamide: step 1/2. Its function is as follows. Part of the phosphoribosylformylglycinamidine synthase complex involved in the purines biosynthetic pathway. Catalyzes the ATP-dependent conversion of formylglycinamide ribonucleotide (FGAR) and glutamine to yield formylglycinamidine ribonucleotide (FGAM) and glutamate. The FGAM synthase complex is composed of three subunits. PurQ produces an ammonia molecule by converting glutamine to glutamate. PurL transfers the ammonia molecule to FGAR to form FGAM in an ATP-dependent manner. PurS interacts with PurQ and PurL and is thought to assist in the transfer of the ammonia molecule from PurQ to PurL. This is Phosphoribosylformylglycinamidine synthase subunit PurQ from Anoxybacillus flavithermus (strain DSM 21510 / WK1).